Consider the following 189-residue polypeptide: Imidazoleglycerol-phosphate dehydratase (189 aa).

Belongs to the imidazoleglycerol-phosphate dehydratase family.

It localises to the cytoplasm. The catalysed reaction is D-erythro-1-(imidazol-4-yl)glycerol 3-phosphate = 3-(imidazol-4-yl)-2-oxopropyl phosphate + H2O. Its pathway is amino-acid biosynthesis; L-histidine biosynthesis; L-histidine from 5-phospho-alpha-D-ribose 1-diphosphate: step 6/9. This chain is Imidazoleglycerol-phosphate dehydratase, found in Nautilia profundicola (strain ATCC BAA-1463 / DSM 18972 / AmH).